An 860-amino-acid chain; its full sequence is Leucine--tRNA ligase (860 aa).

The short motif at 42 to 52 (PYPSGRLHMGH) is the 'HIGH' region element. A 'KMSKS' region motif is present at residues 619–623 (KMSKS). ATP is bound at residue Lys-622.

The protein belongs to the class-I aminoacyl-tRNA synthetase family.

The protein resides in the cytoplasm. It catalyses the reaction tRNA(Leu) + L-leucine + ATP = L-leucyl-tRNA(Leu) + AMP + diphosphate. In Escherichia coli O17:K52:H18 (strain UMN026 / ExPEC), this protein is Leucine--tRNA ligase.